A 395-amino-acid polypeptide reads, in one-letter code: Chalcone synthase 3 (395 aa).

Val2 carries the post-translational modification N-acetylvaline. Residue Cys169 is part of the active site.

Belongs to the thiolase-like superfamily. Chalcone/stilbene synthases family.

The enzyme catalyses (E)-4-coumaroyl-CoA + 3 malonyl-CoA + 3 H(+) = 2',4,4',6'-tetrahydroxychalcone + 3 CO2 + 4 CoA. Its pathway is secondary metabolite biosynthesis; flavonoid biosynthesis. The primary product of this enzyme is 4,2',4',6'-tetrahydroxychalcone (also termed naringenin-chalcone or chalcone) which can under specific conditions spontaneously isomerize into naringenin. The protein is Chalcone synthase 3 (CHS3) of Sinapis alba (White mustard).